We begin with the raw amino-acid sequence, 382 residues long: Small ribosomal subunit protein bS1 homolog (382 aa).

S1 motif domains follow at residues 18–85 (GDVV…LSKR), 103–168 (GHVF…LSHK), 189–257 (GDVV…LSIK), and 274–343 (GDIR…LSIK). A Phosphoserine modification is found at serine 244.

Belongs to the bacterial ribosomal protein bS1 family.

The sequence is that of Small ribosomal subunit protein bS1 homolog from Bacillus cereus (strain ATCC 10987 / NRS 248).